Consider the following 252-residue polypeptide: Carbohydrate deacetylase (252 aa).

2 residues coordinate Mg(2+): histidine 59 and histidine 122.

The protein belongs to the YdjC deacetylase family. In terms of assembly, homodimer. The cofactor is Mg(2+).

In terms of biological role, probably catalyzes the deacetylation of acetylated carbohydrates an important step in the degradation of oligosaccharides. The sequence is that of Carbohydrate deacetylase from Vibrio cholerae serotype O1 (strain ATCC 39315 / El Tor Inaba N16961).